Reading from the N-terminus, the 508-residue chain is Flavonoid 3',5'-hydroxylase 2 (508 aa).

A heme-binding site is contributed by Cys443.

It belongs to the cytochrome P450 family. It depends on heme as a cofactor. As to expression, flowers.

Its subcellular location is the microsome. The protein resides in the endoplasmic reticulum. It carries out the reaction a 3',5'-unsubstituted flavanone + 2 reduced [NADPH--hemoprotein reductase] + 2 O2 = a 3',5'-dihydroxyflavanone + 2 oxidized [NADPH--hemoprotein reductase] + 2 H2O + 2 H(+). Its pathway is pigment biosynthesis; anthocyanin biosynthesis. In terms of biological role, catalyzes the 3'5'-hydroxylation of naringenin and eriodictyol to form 5,7,3,'4',5'-pentahydroxyflavanone and 3',5'-hydroxylation of dihydrokaempferol and dihydroquercetin to form dihydromyricetin. This Petunia hybrida (Petunia) protein is Flavonoid 3',5'-hydroxylase 2 (CYP75A3).